The primary structure comprises 545 residues: Phenylalanine--tRNA ligase beta subunit (545 aa).

The B5 domain occupies 268–343; sequence FLHKIQNVRE…MSIGYNNLEP (76 aa). Positions 321, 327, 330, and 331 each coordinate Mg(2+).

This sequence belongs to the phenylalanyl-tRNA synthetase beta subunit family. Type 2 subfamily. In terms of assembly, tetramer of two alpha and two beta subunits. Mg(2+) is required as a cofactor.

The protein localises to the cytoplasm. The enzyme catalyses tRNA(Phe) + L-phenylalanine + ATP = L-phenylalanyl-tRNA(Phe) + AMP + diphosphate + H(+). This Saccharolobus islandicus (strain L.S.2.15 / Lassen #1) (Sulfolobus islandicus) protein is Phenylalanine--tRNA ligase beta subunit.